The chain runs to 499 residues: Glycerol kinase (499 aa).

Position 13 (Thr13) interacts with ADP. Residues Thr13, Thr14, and Ser15 each contribute to the ATP site. A sn-glycerol 3-phosphate-binding site is contributed by Thr13. Arg17 serves as a coordination point for ADP. Sn-glycerol 3-phosphate-binding residues include Arg83, Glu84, Tyr135, and Asp245. Glycerol-binding residues include Arg83, Glu84, Tyr135, Asp245, and Gln246. Thr267 and Gly310 together coordinate ADP. 4 residues coordinate ATP: Thr267, Gly310, Gln314, and Ala411. Ala411 and Asn415 together coordinate ADP.

This sequence belongs to the FGGY kinase family.

It carries out the reaction glycerol + ATP = sn-glycerol 3-phosphate + ADP + H(+). Its pathway is polyol metabolism; glycerol degradation via glycerol kinase pathway; sn-glycerol 3-phosphate from glycerol: step 1/1. With respect to regulation, inhibited by fructose 1,6-bisphosphate (FBP). Key enzyme in the regulation of glycerol uptake and metabolism. Catalyzes the phosphorylation of glycerol to yield sn-glycerol 3-phosphate. In Xylella fastidiosa (strain 9a5c), this protein is Glycerol kinase.